The following is a 316-amino-acid chain: Alpha- and gamma-adaptin-binding protein p34 (316 aa).

Positions 198 to 232 (ASAESCHSEQQEPSPTAERTESLPGHHSGACGSAG) are disordered. Low complexity predominate over residues 222 to 232 (GHHSGACGSAG). Ser311 and Ser312 each carry phosphoserine.

Associated with AP-1 and AP-2 complexes.

It is found in the cytoplasm. Its subcellular location is the cytosol. In terms of biological role, may be involved in endocytic recycling of growth factor receptors such as EGFR. The sequence is that of Alpha- and gamma-adaptin-binding protein p34 (Aagab) from Mus musculus (Mouse).